A 211-amino-acid chain; its full sequence is GATA transcription factor 19 (211 aa).

The segment at 77 to 102 (CANCDTTSTPLWRNGPRGPKSLCNAC) adopts a GATA-type zinc-finger fold. Residues 111–131 (RRASTARNSTSGGGSTAAGVP) form a disordered region.

Belongs to the type IV zinc-finger family. Class B subfamily. Forms heterodimers with GATA18.

It is found in the nucleus. Transcriptional regulator that specifically binds 5'-GATA-3' or 5'-GAT-3' motifs within gene promoters. Regulates both flower and shoot apical meristem (SAM) development, especially for establishing organ boundaries in shoots and flowers, probably by controlling the number and position of WUS-expressing cells. This Arabidopsis thaliana (Mouse-ear cress) protein is GATA transcription factor 19.